We begin with the raw amino-acid sequence, 373 residues long: ATP phosphoribosyltransferase regulatory subunit (373 aa).

The protein belongs to the class-II aminoacyl-tRNA synthetase family. HisZ subfamily. In terms of assembly, heteromultimer composed of HisG and HisZ subunits.

It is found in the cytoplasm. It functions in the pathway amino-acid biosynthesis; L-histidine biosynthesis; L-histidine from 5-phospho-alpha-D-ribose 1-diphosphate: step 1/9. In terms of biological role, required for the first step of histidine biosynthesis. May allow the feedback regulation of ATP phosphoribosyltransferase activity by histidine. This is ATP phosphoribosyltransferase regulatory subunit from Rhizobium leguminosarum bv. trifolii (strain WSM2304).